A 105-amino-acid polypeptide reads, in one-letter code: Co-chaperonin GroES 3 (105 aa).

Belongs to the GroES chaperonin family. Heptamer of 7 subunits arranged in a ring. Interacts with the chaperonin GroEL.

It is found in the cytoplasm. Functionally, together with the chaperonin GroEL, plays an essential role in assisting protein folding. The GroEL-GroES system forms a nano-cage that allows encapsulation of the non-native substrate proteins and provides a physical environment optimized to promote and accelerate protein folding. GroES binds to the apical surface of the GroEL ring, thereby capping the opening of the GroEL channel. This chain is Co-chaperonin GroES 3, found in Rhizobium meliloti (strain 1021) (Ensifer meliloti).